Here is a 151-residue protein sequence, read N- to C-terminus: Putative phosphatidylglycerol/phosphatidylinositol transfer protein 3 (151 aa).

The signal sequence occupies residues Met1–Ser26.

It belongs to the NPC2 family. As to quaternary structure, monomer.

In terms of biological role, catalyzes the intermembrane transfer of phosphatidylglycerol and phosphatidylinositol. This is Putative phosphatidylglycerol/phosphatidylinositol transfer protein 3 from Dictyostelium discoideum (Social amoeba).